A 361-amino-acid chain; its full sequence is Phosphoserine aminotransferase (361 aa).

Residue Arg43 participates in L-glutamate binding. Pyridoxal 5'-phosphate-binding positions include 77 to 78 (AS), Trp103, Thr153, Asp173, and Gln196. An N6-(pyridoxal phosphate)lysine modification is found at Lys197. 238–239 (NT) is a pyridoxal 5'-phosphate binding site.

Belongs to the class-V pyridoxal-phosphate-dependent aminotransferase family. SerC subfamily. As to quaternary structure, homodimer. Pyridoxal 5'-phosphate is required as a cofactor.

The protein resides in the cytoplasm. It catalyses the reaction O-phospho-L-serine + 2-oxoglutarate = 3-phosphooxypyruvate + L-glutamate. It carries out the reaction 4-(phosphooxy)-L-threonine + 2-oxoglutarate = (R)-3-hydroxy-2-oxo-4-phosphooxybutanoate + L-glutamate. It functions in the pathway amino-acid biosynthesis; L-serine biosynthesis; L-serine from 3-phospho-D-glycerate: step 2/3. It participates in cofactor biosynthesis; pyridoxine 5'-phosphate biosynthesis; pyridoxine 5'-phosphate from D-erythrose 4-phosphate: step 3/5. In terms of biological role, catalyzes the reversible conversion of 3-phosphohydroxypyruvate to phosphoserine and of 3-hydroxy-2-oxo-4-phosphonooxybutanoate to phosphohydroxythreonine. The sequence is that of Phosphoserine aminotransferase from Pseudomonas syringae pv. tomato (strain ATCC BAA-871 / DC3000).